Here is a 503-residue protein sequence, read N- to C-terminus: Cytochrome P450 monooxygenase roqO (503 aa).

The helical transmembrane segment at 11–31 (YSGTACAISLFIFGITLLFPF) threads the bilayer. A glycan (N-linked (GlcNAc...) asparagine) is linked at Asn205. Residue Cys444 coordinates heme.

It belongs to the cytochrome P450 family. Heme serves as cofactor.

It is found in the membrane. It functions in the pathway alkaloid biosynthesis. Its function is as follows. Cytochrome P450 monooxygenase; part of the gene cluster that mediates the biosynthesis of the mycotoxin meleagrin. The first stage is catalyzed by the dipeptide synthase roqA which condenses histidine and tryptophan to produce histidyltryptophanyldiketopiperazine (HTD). HTD is then converted to roquefortine C through two possible pathways. In the first pathway, prenyltransferase roqD transforms HTD to the intermediate roquefortine D, which is in turn converted to roquefortine C by the cytochrome P450 monooxygenase roqR. In the second pathway, HTD is first converted to the intermediate dehydrohistidyltryptophanyldi-ketopiperazine (DHTD) by roqR which is then prenylated by roqD to form roquefortine C. Roquefortine C can be further transformed to meleagrin via three more reactions including oxydation to glandicolin A by roqM, which is further reduced to glandicoline B by roqO. Finally, glandicoline B is converted to meleagrin by the glandicoline B O-methyltransferase roqN. More studies identified further branching and additional metabolites produced by the roquefortine/meleagrin cluster, including roquefortine F, roquefortine L, roquefortine M, roquefortine N and neoxaline. In Penicillium rubens (strain ATCC 28089 / DSM 1075 / NRRL 1951 / Wisconsin 54-1255) (Penicillium chrysogenum), this protein is Cytochrome P450 monooxygenase roqO.